Reading from the N-terminus, the 454-residue chain is MSARILVVDDIEANVRLLEAKLTAEYYEVSTAMDGPTALAMAARDLPDIILLDVMMPGMDGFTVCRKLKDDPTTRHIPVVLITALDGRGDRIQGLESGASDFLTKPIDDVMLFARVRSLTRFKLVIDELRQREASGRRMGVIAGAAARLDGLGGRVLIVDDNERQAQRVAAELGVEHRPVIESDPEKAKISAGGPVDLVIVNAAAKNFDGLRFTAALRSEERTRQLPVLAMVDPDDRGRMVKALEIGVNDILSRPIDPQELSARVKTQIQRKRYTDYLRNNLDHSLELAVTDQLTGLHNRRYMTGQLDSLVKRATLGGDPVSALLIDIDFFKKINDTFGHDIGDEVLREFALRLASNVRAIDLPCRYGGEEFVVIMPDTALADALRIAERIRMHVSGSPFTVAHGREMLNVTISIGVSATAGEGDTPEALLKRADEGVYQAKASGRNAVVGKAA.

Response regulatory domains follow at residues 4 to 120 and 155 to 269; these read RILV…RSLT and RVLI…KTQI. Mg(2+)-binding residues include D9, D10, D53, and M55. The residue at position 53 (D53) is a 4-aspartylphosphate. A GGDEF domain is found at 319–454; the sequence is DPVSALLIDI…GRNAVVGKAA (136 aa). Substrate is bound by residues N335 and D344. E370 (proton acceptor) is an active-site residue.

Homodimer. Inactive monomer in solution. Post-translationally, phosphorylated by PleC and DivJ. Phosphorylation stimulates cyclase activity.

It localises to the cytoplasm. The catalysed reaction is 2 GTP = 3',3'-c-di-GMP + 2 diphosphate. Its pathway is purine metabolism; 3',5'-cyclic di-GMP biosynthesis. With respect to regulation, allosterically inhibited by the product c-di-GMP. Its function is as follows. Response regulator that is part of a signal transduction pathway controlling cell differentiation in the swarmer-to-stalked cell transition. In terms of biological role, catalyzes the condensation of two GTP molecules to the cyclic dinucleotide di-GMP (c-di-GMP), which acts as a secondary messenger. The sequence is that of Response regulator PleD (pleD) from Caulobacter vibrioides (strain ATCC 19089 / CIP 103742 / CB 15) (Caulobacter crescentus).